A 449-amino-acid chain; its full sequence is MSHDSVPSPITARAGTPLRGRLRPPGDKSISHRAMILGLLSLGETRVEGLLEGDDVLRTAAAARALGAGIDRDGPGRWRVRGVGIGGLSDPEGVLDFGNAGTGSRLMMGVVGGQPVTATFDGDASLRKRPMRRILDPLVQMGAQILSEQAGGRVPLTLRGPEEAIPITYATPVASAQVKSAVLLAGLNAPGTTTVIEAAATRDHTERMLRLFGAEVTVAAHGPAGHGRAIALTGQPTLRAAEVIVPADPSSAAFPIVAALIVPGSDVVIEGVMMNPLRTGLITTLIEMGADIARLNERDEGGETVADLRVRASRLAGVTVPPERAPAMIDEYPVLAVAAAFAEGTTRMQGLHELRVKESDRLAAVADGLRANGVAHAVEGDDLIVHGDGRPAPGGGTVATHLDHRIAMAFLVMGLAAGEPVTVDDGAMIATSYPAFLADLRGLGAAFAE.

Positions 1-29 are disordered; that stretch reads MSHDSVPSPITARAGTPLRGRLRPPGDKS. Lys28, Ser29, and Arg33 together coordinate 3-phosphoshikimate. Lys28 contributes to the phosphoenolpyruvate binding site. Phosphoenolpyruvate contacts are provided by Gly101 and Arg129. 3-phosphoshikimate contacts are provided by Ser175, Gln177, Asp330, and Lys357. Gln177 serves as a coordination point for phosphoenolpyruvate. Asp330 acts as the Proton acceptor in catalysis. The phosphoenolpyruvate site is built by Arg361 and Arg405.

It belongs to the EPSP synthase family. As to quaternary structure, monomer.

The protein resides in the cytoplasm. It catalyses the reaction 3-phosphoshikimate + phosphoenolpyruvate = 5-O-(1-carboxyvinyl)-3-phosphoshikimate + phosphate. It functions in the pathway metabolic intermediate biosynthesis; chorismate biosynthesis; chorismate from D-erythrose 4-phosphate and phosphoenolpyruvate: step 6/7. Catalyzes the transfer of the enolpyruvyl moiety of phosphoenolpyruvate (PEP) to the 5-hydroxyl of shikimate-3-phosphate (S3P) to produce enolpyruvyl shikimate-3-phosphate and inorganic phosphate. This Methylobacterium sp. (strain 4-46) protein is 3-phosphoshikimate 1-carboxyvinyltransferase.